The chain runs to 202 residues: Protein SYM1 (202 aa).

A run of 4 helical transmembrane segments spans residues 15–31, 48–66, 82–99, and 143–159; these read MAVT…DCVS, AGIY…FRFL, AVFA…MGLL, and VLAS…FLAY.

It belongs to the peroxisomal membrane protein PXMP2/4 family.

The protein localises to the mitochondrion inner membrane. In terms of biological role, may be involved in cellular response to stress. Required to maintain mitochondrial DNA (mtDNA) integrity and stability. This is Protein SYM1 (SYM1) from Yarrowia lipolytica (strain CLIB 122 / E 150) (Yeast).